A 45-amino-acid polypeptide reads, in one-letter code: Small, acid-soluble spore protein P (45 aa).

Basic and acidic residues predominate over residues 1–12 (MTERHTAKDIRK). The interval 1-45 (MTERHTAKDIRKNAPKGENPGQPEPLSGSKKVKKRNHVSQTNGEG) is disordered.

The protein belongs to the SspP family.

It is found in the spore core. This Halalkalibacterium halodurans (strain ATCC BAA-125 / DSM 18197 / FERM 7344 / JCM 9153 / C-125) (Bacillus halodurans) protein is Small, acid-soluble spore protein P.